Consider the following 99-residue polypeptide: Large ribosomal subunit protein uL23 (99 aa).

This sequence belongs to the universal ribosomal protein uL23 family. In terms of assembly, part of the 50S ribosomal subunit. Contacts protein L29, and trigger factor when it is bound to the ribosome.

Functionally, one of the early assembly proteins it binds 23S rRNA. One of the proteins that surrounds the polypeptide exit tunnel on the outside of the ribosome. Forms the main docking site for trigger factor binding to the ribosome. This chain is Large ribosomal subunit protein uL23, found in Synechococcus sp. (strain JA-2-3B'a(2-13)) (Cyanobacteria bacterium Yellowstone B-Prime).